The chain runs to 244 residues: Flavin-dependent thymidylate synthase (244 aa).

Residues 2–207 (VRVTLVNYTK…DIRPIIKWAK (206 aa)) form the ThyX domain. FAD-binding positions include Ser-56, 80 to 82 (RHR), and Gln-88. Residues 77-80 (QLVR), 88-92 (QQSQR), and Arg-146 each bind dUMP. Residues 80 to 90 (RHRIASYTQQS) carry the ThyX motif motif. FAD contacts are provided by residues 162–164 (NLR) and His-168. Arg-173 lines the dUMP pocket. The active-site Involved in ionization of N3 of dUMP, leading to its activation is Arg-173.

It belongs to the thymidylate synthase ThyX family. Homotetramer. Requires FAD as cofactor.

The catalysed reaction is dUMP + (6R)-5,10-methylene-5,6,7,8-tetrahydrofolate + NADPH + H(+) = dTMP + (6S)-5,6,7,8-tetrahydrofolate + NADP(+). The protein operates within pyrimidine metabolism; dTTP biosynthesis. Functionally, catalyzes the reductive methylation of 2'-deoxyuridine-5'-monophosphate (dUMP) to 2'-deoxythymidine-5'-monophosphate (dTMP) while utilizing 5,10-methylenetetrahydrofolate (mTHF) as the methyl donor, and NADPH and FADH(2) as the reductant. In Pyrococcus furiosus (strain ATCC 43587 / DSM 3638 / JCM 8422 / Vc1), this protein is Flavin-dependent thymidylate synthase.